The primary structure comprises 62 residues: Large ribosomal subunit protein eL24 (62 aa).

C6, C9, C32, and C36 together coordinate Zn(2+). The segment at 6 to 36 (CSFCEGKIEPGCGKKYVKKDGSVMQFCSSKC) adopts a C4-type zinc-finger fold.

This sequence belongs to the eukaryotic ribosomal protein eL24 family. In terms of assembly, part of the 50S ribosomal subunit. Forms a cluster with proteins L3 and L14. The cofactor is Zn(2+).

Binds to the 23S rRNA. The protein is Large ribosomal subunit protein eL24 of Methanococcus vannielii (strain ATCC 35089 / DSM 1224 / JCM 13029 / OCM 148 / SB).